The following is a 274-amino-acid chain: Eukaryotic translation initiation factor 3 subunit G (274 aa).

In terms of domain architecture, RRM spans 192 to 270 (TAIRISNLSN…LILNVEWSKP (79 aa)).

Belongs to the eIF-3 subunit G family. In terms of assembly, component of the eukaryotic translation initiation factor 3 (eIF-3) complex.

The protein resides in the cytoplasm. Functionally, RNA-binding component of the eukaryotic translation initiation factor 3 (eIF-3) complex, which is involved in protein synthesis of a specialized repertoire of mRNAs and, together with other initiation factors, stimulates binding of mRNA and methionyl-tRNAi to the 40S ribosome. The eIF-3 complex specifically targets and initiates translation of a subset of mRNAs involved in cell proliferation. This subunit can bind 18S rRNA. The sequence is that of Eukaryotic translation initiation factor 3 subunit G from Bombyx mori (Silk moth).